A 119-amino-acid polypeptide reads, in one-letter code: Protein TraH (119 aa).

A disordered region spans residues 1–67; that stretch reads MSNPNEMTDE…ALDESRRPKA (67 aa). The segment covering 41–54 has biased composition (low complexity); that stretch reads APSAPAEPSHSASP.

Functionally, the initiation process of transfer DNA synthesis requires the interaction of at least three plasmid-specific components (TraH, TraI, and TraJ) at the transfer origin resulting in the assembly of a specialized nucleoprotein complex - the relaxosome. This is Protein TraH (traH) from Escherichia coli.